A 260-amino-acid chain; its full sequence is Phosphonates import ATP-binding protein PhnC 2 (260 aa).

Residues I4–R245 enclose the ABC transporter domain. G37–S44 is a binding site for ATP.

This sequence belongs to the ABC transporter superfamily. Phosphonates importer (TC 3.A.1.9.1) family. As to quaternary structure, the complex is composed of two ATP-binding proteins (PhnC), two transmembrane proteins (PhnE) and a solute-binding protein (PhnD).

It is found in the cell inner membrane. It catalyses the reaction phosphonate(out) + ATP + H2O = phosphonate(in) + ADP + phosphate + H(+). Part of the ABC transporter complex PhnCDE involved in phosphonates import. Responsible for energy coupling to the transport system. In Trichodesmium erythraeum (strain IMS101), this protein is Phosphonates import ATP-binding protein PhnC 2.